A 453-amino-acid polypeptide reads, in one-letter code: Ribulose bisphosphate carboxylase large chain (453 aa).

A propeptide spanning residues 1 to 2 (MS) is cleaved from the precursor. Pro-3 carries the post-translational modification N-acetylproline. Lys-14 bears the N6,N6,N6-trimethyllysine mark. Substrate-binding residues include Asn-123 and Thr-173. Lys-175 (proton acceptor) is an active-site residue. Residue Lys-177 coordinates substrate. Residues Lys-201, Asp-203, and Glu-204 each contribute to the Mg(2+) site. Lys-201 carries the N6-carboxylysine modification. His-294 functions as the Proton acceptor in the catalytic mechanism. Residues Arg-295, His-327, and Ser-379 each contribute to the substrate site.

The protein belongs to the RuBisCO large chain family. Type I subfamily. Heterohexadecamer of 8 large chains and 8 small chains; disulfide-linked. The disulfide link is formed within the large subunit homodimers. Mg(2+) serves as cofactor. The disulfide bond which can form in the large chain dimeric partners within the hexadecamer appears to be associated with oxidative stress and protein turnover.

It localises to the plastid. The protein resides in the chloroplast. The catalysed reaction is 2 (2R)-3-phosphoglycerate + 2 H(+) = D-ribulose 1,5-bisphosphate + CO2 + H2O. It carries out the reaction D-ribulose 1,5-bisphosphate + O2 = 2-phosphoglycolate + (2R)-3-phosphoglycerate + 2 H(+). In terms of biological role, ruBisCO catalyzes two reactions: the carboxylation of D-ribulose 1,5-bisphosphate, the primary event in carbon dioxide fixation, as well as the oxidative fragmentation of the pentose substrate in the photorespiration process. Both reactions occur simultaneously and in competition at the same active site. This Crucianella angustifolia (Narrow-leaved crosswort) protein is Ribulose bisphosphate carboxylase large chain.